We begin with the raw amino-acid sequence, 377 residues long: Carbamoyl phosphate synthase small chain (377 aa).

The tract at residues 1-186 (MNTPALLVLA…LGKGFVTPDK (186 aa)) is CPSase. L-glutamine contacts are provided by Ser47, Gly238, and Gly240. The 188-residue stretch at 190 to 377 (HVVAYDFGVK…IGNMKAAKQA (188 aa)) folds into the Glutamine amidotransferase type-1 domain. The Nucleophile role is filled by Cys266. 5 residues coordinate L-glutamine: Leu267, Gln270, Asn308, Gly310, and Phe311. Active-site residues include His350 and Glu352.

The protein belongs to the CarA family. As to quaternary structure, composed of two chains; the small (or glutamine) chain promotes the hydrolysis of glutamine to ammonia, which is used by the large (or ammonia) chain to synthesize carbamoyl phosphate. Tetramer of heterodimers (alpha,beta)4.

It carries out the reaction hydrogencarbonate + L-glutamine + 2 ATP + H2O = carbamoyl phosphate + L-glutamate + 2 ADP + phosphate + 2 H(+). The catalysed reaction is L-glutamine + H2O = L-glutamate + NH4(+). Its pathway is amino-acid biosynthesis; L-arginine biosynthesis; carbamoyl phosphate from bicarbonate: step 1/1. The protein operates within pyrimidine metabolism; UMP biosynthesis via de novo pathway; (S)-dihydroorotate from bicarbonate: step 1/3. Functionally, small subunit of the glutamine-dependent carbamoyl phosphate synthetase (CPSase). CPSase catalyzes the formation of carbamoyl phosphate from the ammonia moiety of glutamine, carbonate, and phosphate donated by ATP, constituting the first step of 2 biosynthetic pathways, one leading to arginine and/or urea and the other to pyrimidine nucleotides. The small subunit (glutamine amidotransferase) binds and cleaves glutamine to supply the large subunit with the substrate ammonia. The protein is Carbamoyl phosphate synthase small chain of Neisseria gonorrhoeae.